A 107-amino-acid polypeptide reads, in one-letter code: Thioredoxin 1 (107 aa).

Residues 2–107 form the Thioredoxin domain; that stretch reads SVAAAVTDAT…TLANTLDKHL (106 aa). C32 and C35 are joined by a disulfide.

This sequence belongs to the thioredoxin family.

Its function is as follows. Participates in various redox reactions through the reversible oxidation of its active center dithiol to a disulfide and catalyzes dithiol-disulfide exchange reactions. The protein is Thioredoxin 1 (trxA) of Synechococcus elongatus (strain ATCC 33912 / PCC 7942 / FACHB-805) (Anacystis nidulans R2).